A 50-amino-acid polypeptide reads, in one-letter code: MKQMMIEASISKDTLRLLICFFEIKQCHISLQPTCYYQNWVRYSSIYYQL.

This is an uncharacterized protein from Saccharomyces cerevisiae (strain ATCC 204508 / S288c) (Baker's yeast).